The sequence spans 222 residues: MPNYTLYYFNGRGRAEICRMLMAAAGVQYTDKRFEFNEWDKYRNDMPSMCVPVLDIDGQNKMPETMAIARYLARENGYYGKNNMDMFRIDYICDCFYEILHDYMRYFHTKNGRFMQGSGTDMSPDMDPTQMTSYIQNRYLDTCRRILSFLERTLEMRNGGKEFFMGDQMMLCDMMCYCCLENPMLEDQTTFNNFPKLMSLWKRVASHPKITPYLKKRNNTNW.

The GST N-terminal domain occupies 2–80; it reads PNYTLYYFNG…YLARENGYYG (79 aa). The GST C-terminal domain occupies 82–222; sequence NNMDMFRIDY…YLKKRNNTNW (141 aa).

The protein belongs to the GST superfamily. As to expression, lens.

Its function is as follows. S-crystallins are structural components of squids and octopi eye lens. Contains relatively little if any GST activity. The sequence is that of S-crystallin SL20-1 from Nototodarus sloanii (Wellington flying squid).